A 777-amino-acid chain; its full sequence is Androgen receptor (777 aa).

The interval 1 to 416 is modulating; it reads MEVHIGLGGV…IDYYFPPQKP (416 aa). 3 disordered regions span residues 53-95, 110-132, and 205-241; these read CVHP…QAPQ, GEQG…YPES, and RRAG…LSEP. 2 NR C4-type zinc fingers span residues 417 to 434 and 453 to 472; these read CLSC…ALTC and CASR…CPSC. The nuclear receptor DNA-binding region spans 417 to 489; it reads CLSCEDEASG…AGMTLGARKL (73 aa). The region spanning 526-757 is the NR LBD domain; that stretch reads SCQPIFLNVL…DFPEMMSEII (232 aa). Positions 563, 610, and 735 each coordinate 17beta-hydroxy-5alpha-androstan-3-one.

This sequence belongs to the nuclear hormone receptor family. NR3 subfamily. Binds DNA as a homodimer. Interacts via the ligand-binding domain with LXXLL and FXXLF motifs from coactivator proteins. Interacts (via ligand-binding domain) with TRIM68. In terms of tissue distribution, detected in somatic Leydig and Sertoli cells in testis with high level expression. Also detected at lower expression levels in forebrain and heart.

The protein resides in the nucleus. Its subcellular location is the cytoplasm. Functionally, steroid hormone receptors are ligand-activated transcription factors that regulate eukaryotic gene expression and affect cellular proliferation and differentiation in target tissues. Transcription factor activity is modulated by bound coactivator and corepressor proteins. The chain is Androgen receptor (ar) from Aquarana catesbeiana (American bullfrog).